The following is an 85-amino-acid chain: Beta-insect depressant toxin Lqh-dprIT3d (85 aa).

Residues 1–21 (MKLLLLLTISASMLIEGLVNA) form the signal peptide. The LCN-type CS-alpha/beta domain occupies 22-82 (DGYIRGGDGC…EWDYETNTCG (61 aa)). Intrachain disulfides connect Cys31–Cys81, Cys35–Cys56, Cys42–Cys63, and Cys46–Cys65. Residue Gly82 is modified to Glycine amide.

This sequence belongs to the long (4 C-C) scorpion toxin superfamily. Sodium channel inhibitor family. Beta subfamily. Expressed by the venom gland.

Its subcellular location is the secreted. Functionally, depressant insect beta-toxins cause a transient contraction paralysis followed by a slow flaccid paralysis. They bind voltage-independently at site-4 of sodium channels (Nav) and block action potentials, primarily by depolarizing the axonal membrane and suppressing the sodium current. This depressant toxin is active only on insects. It is found in a relatively small amount in the venom, and its activity on insects is 10-fold higher compared to other known depressant toxins. The sequence is that of Beta-insect depressant toxin Lqh-dprIT3d from Leiurus hebraeus (Hebrew deathstalker scorpion).